Consider the following 684-residue polypeptide: Methionine--tRNA ligase (684 aa).

Residues 15–25 (PYANGAIHLGH) carry the 'HIGH' region motif. Zn(2+) is bound by residues cysteine 146, cysteine 149, cysteine 159, and cysteine 162. A 'KMSKS' region motif is present at residues 331–335 (KMSKS). Residue lysine 334 participates in ATP binding. Positions 582-684 (DFAKLDLRVA…SGVTAGMQVR (103 aa)) constitute a tRNA-binding domain.

It belongs to the class-I aminoacyl-tRNA synthetase family. MetG type 1 subfamily. In terms of assembly, homodimer. Zn(2+) serves as cofactor.

The protein localises to the cytoplasm. It catalyses the reaction tRNA(Met) + L-methionine + ATP = L-methionyl-tRNA(Met) + AMP + diphosphate. Functionally, is required not only for elongation of protein synthesis but also for the initiation of all mRNA translation through initiator tRNA(fMet) aminoacylation. The protein is Methionine--tRNA ligase of Glaesserella parasuis serovar 5 (strain SH0165) (Haemophilus parasuis).